Here is a 330-residue protein sequence, read N- to C-terminus: Beta-ketoacyl-[acyl-carrier-protein] synthase III (330 aa).

Residues cysteine 114 and histidine 255 contribute to the active site. The tract at residues 256–260 (QANQR) is ACP-binding. Asparagine 285 is an active-site residue.

Belongs to the thiolase-like superfamily. FabH family. As to quaternary structure, homodimer.

Its subcellular location is the cytoplasm. The enzyme catalyses malonyl-[ACP] + acetyl-CoA + H(+) = 3-oxobutanoyl-[ACP] + CO2 + CoA. The protein operates within lipid metabolism; fatty acid biosynthesis. Functionally, catalyzes the condensation reaction of fatty acid synthesis by the addition to an acyl acceptor of two carbons from malonyl-ACP. Catalyzes the first condensation reaction which initiates fatty acid synthesis and may therefore play a role in governing the total rate of fatty acid production. Possesses both acetoacetyl-ACP synthase and acetyl transacylase activities. Its substrate specificity determines the biosynthesis of branched-chain and/or straight-chain of fatty acids. The chain is Beta-ketoacyl-[acyl-carrier-protein] synthase III from Trichormus variabilis (strain ATCC 29413 / PCC 7937) (Anabaena variabilis).